Here is a 459-residue protein sequence, read N- to C-terminus: Serine--tRNA ligase (459 aa).

254–256 serves as a coordination point for L-serine; sequence TAE. ATP is bound by residues 285-287 and Val301; that span reads RKE. Glu308 contacts L-serine. Position 372–375 (372–375) interacts with ATP; it reads EMVS. L-serine is bound at residue Thr408.

Belongs to the class-II aminoacyl-tRNA synthetase family. Type-1 seryl-tRNA synthetase subfamily. Homodimer. The tRNA molecule binds across the dimer.

It localises to the cytoplasm. The catalysed reaction is tRNA(Ser) + L-serine + ATP = L-seryl-tRNA(Ser) + AMP + diphosphate + H(+). It catalyses the reaction tRNA(Sec) + L-serine + ATP = L-seryl-tRNA(Sec) + AMP + diphosphate + H(+). The protein operates within aminoacyl-tRNA biosynthesis; selenocysteinyl-tRNA(Sec) biosynthesis; L-seryl-tRNA(Sec) from L-serine and tRNA(Sec): step 1/1. Its function is as follows. Catalyzes the attachment of serine to tRNA(Ser). Is also able to aminoacylate tRNA(Sec) with serine, to form the misacylated tRNA L-seryl-tRNA(Sec), which will be further converted into selenocysteinyl-tRNA(Sec). This Desulfurococcus amylolyticus (strain DSM 18924 / JCM 16383 / VKM B-2413 / 1221n) (Desulfurococcus kamchatkensis) protein is Serine--tRNA ligase.